The sequence spans 400 residues: Arrestin, lateral eye (400 aa).

The protein belongs to the arrestin family. In terms of processing, phosphorylated.

In terms of biological role, plays an important role in the photoreceptor transduction. In Limulus polyphemus (Atlantic horseshoe crab), this protein is Arrestin, lateral eye.